The sequence spans 262 residues: Acyl-[acyl-carrier-protein]--UDP-N-acetylglucosamine O-acyltransferase (262 aa).

The protein belongs to the transferase hexapeptide repeat family. LpxA subfamily. In terms of assembly, homotrimer.

It is found in the cytoplasm. The catalysed reaction is a (3R)-hydroxyacyl-[ACP] + UDP-N-acetyl-alpha-D-glucosamine = a UDP-3-O-[(3R)-3-hydroxyacyl]-N-acetyl-alpha-D-glucosamine + holo-[ACP]. It participates in glycolipid biosynthesis; lipid IV(A) biosynthesis; lipid IV(A) from (3R)-3-hydroxytetradecanoyl-[acyl-carrier-protein] and UDP-N-acetyl-alpha-D-glucosamine: step 1/6. Involved in the biosynthesis of lipid A, a phosphorylated glycolipid that anchors the lipopolysaccharide to the outer membrane of the cell. The protein is Acyl-[acyl-carrier-protein]--UDP-N-acetylglucosamine O-acyltransferase of Haemophilus influenzae (strain ATCC 51907 / DSM 11121 / KW20 / Rd).